Consider the following 208-residue polypeptide: MRKIRTKICGITTPEDASAAVAAGADAVGLVFFQGSSRAVDIARAKKITAALPPFVSVVALFVNESAQNIRRILAEVPIHIIQFHGDEDDTFCRQFDRPYIKAIRVQTASDIRNAADRFPDAQALLFDAYHPSEYGGTGHRFDWTLLAEYSGKPWVLAGGLTPENVGEAVRITGAEAVDVSGGVEASKGKKDPAKVAAFIATANRLSR.

The protein belongs to the TrpF family.

It catalyses the reaction N-(5-phospho-beta-D-ribosyl)anthranilate = 1-(2-carboxyphenylamino)-1-deoxy-D-ribulose 5-phosphate. It participates in amino-acid biosynthesis; L-tryptophan biosynthesis; L-tryptophan from chorismate: step 3/5. In Neisseria meningitidis serogroup C / serotype 2a (strain ATCC 700532 / DSM 15464 / FAM18), this protein is N-(5'-phosphoribosyl)anthranilate isomerase.